We begin with the raw amino-acid sequence, 517 residues long: Ribonuclease Y (517 aa).

The helical transmembrane segment at 1–21 threads the bilayer; the sequence is MIESLIALIAAIVGLGIGYLV. The region spanning 207–273 is the KH domain; the sequence is LINVINIKND…TKVIELLVED (67 aa). Residues 333 to 426 enclose the HD domain; that stretch reads ALAHSLEVAH…VCAADTLSAA (94 aa).

Belongs to the RNase Y family.

Its subcellular location is the cell membrane. In terms of biological role, endoribonuclease that initiates mRNA decay. The chain is Ribonuclease Y from Campylobacter jejuni subsp. jejuni serotype O:23/36 (strain 81-176).